The chain runs to 281 residues: Pantothenate synthetase (281 aa).

ATP is bound at residue 26 to 33 (MGSLHEGH). The active-site Proton donor is H33. Residue Q57 coordinates (R)-pantoate. Position 57 (Q57) interacts with beta-alanine. An ATP-binding site is contributed by 144-147 (GKKD). A (R)-pantoate-binding site is contributed by Q150. ATP is bound by residues A173 and 181–184 (LSSR).

The protein belongs to the pantothenate synthetase family. Homodimer.

It is found in the cytoplasm. The enzyme catalyses (R)-pantoate + beta-alanine + ATP = (R)-pantothenate + AMP + diphosphate + H(+). It functions in the pathway cofactor biosynthesis; (R)-pantothenate biosynthesis; (R)-pantothenate from (R)-pantoate and beta-alanine: step 1/1. Functionally, catalyzes the condensation of pantoate with beta-alanine in an ATP-dependent reaction via a pantoyl-adenylate intermediate. The polypeptide is Pantothenate synthetase (Methylibium petroleiphilum (strain ATCC BAA-1232 / LMG 22953 / PM1)).